The following is a 608-amino-acid chain: 1-deoxy-D-xylulose-5-phosphate synthase (608 aa).

Residues histidine 66 and 107–109 each bind thiamine diphosphate; that span reads GHA. Aspartate 138 lines the Mg(2+) pocket. Thiamine diphosphate contacts are provided by residues 139–140, asparagine 167, phenylalanine 277, and glutamate 350; that span reads GA. Asparagine 167 lines the Mg(2+) pocket.

It belongs to the transketolase family. DXPS subfamily. In terms of assembly, homodimer. Mg(2+) serves as cofactor. The cofactor is thiamine diphosphate.

It carries out the reaction D-glyceraldehyde 3-phosphate + pyruvate + H(+) = 1-deoxy-D-xylulose 5-phosphate + CO2. It participates in metabolic intermediate biosynthesis; 1-deoxy-D-xylulose 5-phosphate biosynthesis; 1-deoxy-D-xylulose 5-phosphate from D-glyceraldehyde 3-phosphate and pyruvate: step 1/1. Its function is as follows. Catalyzes the acyloin condensation reaction between C atoms 2 and 3 of pyruvate and glyceraldehyde 3-phosphate to yield 1-deoxy-D-xylulose-5-phosphate (DXP). This Thermotoga petrophila (strain ATCC BAA-488 / DSM 13995 / JCM 10881 / RKU-1) protein is 1-deoxy-D-xylulose-5-phosphate synthase.